The sequence spans 244 residues: Adenosylcobinamide-GDP ribazoletransferase (244 aa).

5 consecutive transmembrane segments (helical) span residues 31–51 (LLCY…ASHL), 55–75 (APAP…SGAL), 109–129 (IAVV…WVLV), 133–153 (AGAL…GLFL), and 188–208 (LLLG…VFLW).

It belongs to the CobS family. Mg(2+) is required as a cofactor.

Its subcellular location is the cell inner membrane. The enzyme catalyses alpha-ribazole + adenosylcob(III)inamide-GDP = adenosylcob(III)alamin + GMP + H(+). The catalysed reaction is alpha-ribazole 5'-phosphate + adenosylcob(III)inamide-GDP = adenosylcob(III)alamin 5'-phosphate + GMP + H(+). The protein operates within cofactor biosynthesis; adenosylcobalamin biosynthesis; adenosylcobalamin from cob(II)yrinate a,c-diamide: step 7/7. Its function is as follows. Joins adenosylcobinamide-GDP and alpha-ribazole to generate adenosylcobalamin (Ado-cobalamin). Also synthesizes adenosylcobalamin 5'-phosphate from adenosylcobinamide-GDP and alpha-ribazole 5'-phosphate. This chain is Adenosylcobinamide-GDP ribazoletransferase, found in Pseudomonas putida (strain W619).